The sequence spans 460 residues: GTPase Der (460 aa).

2 EngA-type G domains span residues 2–164 and 199–370; these read KKVI…DDEI and IKVG…ANFT. Residues 8–15, 55–59, 116–119, 205–212, 252–256, and 316–319 each bind GTP; these read GRPNVGKS, DSGGL, NKID, GRVNVGKS, DTAGI, and NKWD. The region spanning 371-454 is the KH-like domain; the sequence is QKIATSKLND…PVILLPRKRG (84 aa).

It belongs to the TRAFAC class TrmE-Era-EngA-EngB-Septin-like GTPase superfamily. EngA (Der) GTPase family. In terms of assembly, associates with the 50S ribosomal subunit.

In terms of biological role, GTPase that plays an essential role in the late steps of ribosome biogenesis. In Campylobacter hominis (strain ATCC BAA-381 / DSM 21671 / CCUG 45161 / LMG 19568 / NCTC 13146 / CH001A), this protein is GTPase Der.